A 432-amino-acid chain; its full sequence is Histidine--tRNA ligase (432 aa).

It belongs to the class-II aminoacyl-tRNA synthetase family.

It is found in the cytoplasm. The catalysed reaction is tRNA(His) + L-histidine + ATP = L-histidyl-tRNA(His) + AMP + diphosphate + H(+). The chain is Histidine--tRNA ligase from Pyrococcus furiosus (strain ATCC 43587 / DSM 3638 / JCM 8422 / Vc1).